The sequence spans 134 residues: Small ribosomal subunit protein uS8c (134 aa).

The protein belongs to the universal ribosomal protein uS8 family. In terms of assembly, part of the 30S ribosomal subunit.

It is found in the plastid. It localises to the chloroplast. Its function is as follows. One of the primary rRNA binding proteins, it binds directly to 16S rRNA central domain where it helps coordinate assembly of the platform of the 30S subunit. This is Small ribosomal subunit protein uS8c (rps8) from Nicotiana tomentosiformis (Tobacco).